The chain runs to 158 residues: NAD(P)H-quinone oxidoreductase subunit J, chloroplastic (158 aa).

It belongs to the complex I 30 kDa subunit family. As to quaternary structure, NDH is composed of at least 16 different subunits, 5 of which are encoded in the nucleus.

The protein resides in the plastid. It is found in the chloroplast thylakoid membrane. The enzyme catalyses a plastoquinone + NADH + (n+1) H(+)(in) = a plastoquinol + NAD(+) + n H(+)(out). The catalysed reaction is a plastoquinone + NADPH + (n+1) H(+)(in) = a plastoquinol + NADP(+) + n H(+)(out). In terms of biological role, NDH shuttles electrons from NAD(P)H:plastoquinone, via FMN and iron-sulfur (Fe-S) centers, to quinones in the photosynthetic chain and possibly in a chloroplast respiratory chain. The immediate electron acceptor for the enzyme in this species is believed to be plastoquinone. Couples the redox reaction to proton translocation, and thus conserves the redox energy in a proton gradient. This is NAD(P)H-quinone oxidoreductase subunit J, chloroplastic from Coffea arabica (Arabian coffee).